The chain runs to 645 residues: Acetyl-coenzyme A synthetase (645 aa).

CoA-binding positions include 190–193 (RGGK) and threonine 308. ATP-binding positions include 384 to 386 (GEP), 408 to 413 (DTWWQT), aspartate 497, and arginine 512. Serine 520 provides a ligand contact to CoA. Arginine 523 serves as a coordination point for ATP. Residues valine 534, histidine 536, and isoleucine 539 each coordinate Mg(2+). Lysine 606 bears the N6-acetyllysine mark.

The protein belongs to the ATP-dependent AMP-binding enzyme family. Requires Mg(2+) as cofactor. Post-translationally, acetylated. Deacetylation by the SIR2-homolog deacetylase activates the enzyme.

The catalysed reaction is acetate + ATP + CoA = acetyl-CoA + AMP + diphosphate. In terms of biological role, catalyzes the conversion of acetate into acetyl-CoA (AcCoA), an essential intermediate at the junction of anabolic and catabolic pathways. AcsA undergoes a two-step reaction. In the first half reaction, AcsA combines acetate with ATP to form acetyl-adenylate (AcAMP) intermediate. In the second half reaction, it can then transfer the acetyl group from AcAMP to the sulfhydryl group of CoA, forming the product AcCoA. In Alcanivorax borkumensis (strain ATCC 700651 / DSM 11573 / NCIMB 13689 / SK2), this protein is Acetyl-coenzyme A synthetase.